The following is an 892-amino-acid chain: DNA ligase (892 aa).

The disordered stretch occupies residues 1 to 23; the sequence is MTMTNRDDSEQLAWDFDAPESDG. Residues 99–103, 148–149, and Glu-182 each bind NAD(+); these read DAAYD and SL. Lys-184 (N6-AMP-lysine intermediate) is an active-site residue. NAD(+) contacts are provided by Arg-205, Glu-244, Lys-369, and Lys-393. Residues Cys-490, Cys-493, Cys-509, and Cys-515 each contribute to the Zn(2+) site. Residues 810–892 form the BRCT domain; it reads GLPQTLAGKT…KQLLDTGTVE (83 aa).

It belongs to the NAD-dependent DNA ligase family. LigA subfamily. Requires Mg(2+) as cofactor. Mn(2+) serves as cofactor.

It carries out the reaction NAD(+) + (deoxyribonucleotide)n-3'-hydroxyl + 5'-phospho-(deoxyribonucleotide)m = (deoxyribonucleotide)n+m + AMP + beta-nicotinamide D-nucleotide.. In terms of biological role, DNA ligase that catalyzes the formation of phosphodiester linkages between 5'-phosphoryl and 3'-hydroxyl groups in double-stranded DNA using NAD as a coenzyme and as the energy source for the reaction. It is essential for DNA replication and repair of damaged DNA. This Bifidobacterium adolescentis (strain ATCC 15703 / DSM 20083 / NCTC 11814 / E194a) protein is DNA ligase.